The primary structure comprises 440 residues: Protein dumpy-20 (440 aa).

The disordered stretch occupies residues 96 to 119; the sequence is ILSDPSLHGSNSSSSTSDVGSSVD. Over residues 98–119 the composition is skewed to low complexity; it reads SDPSLHGSNSSSSTSDVGSSVD. BED-type zinc fingers lie at residues 137–186 and 350–399; these read PTEN…YQKV and KTEH…YNDV. Zn(2+) contacts are provided by cysteine 156, cysteine 159, histidine 174, histidine 179, cysteine 369, cysteine 372, histidine 387, and histidine 392.

In terms of biological role, may be directly or indirectly involved in cuticle function. The protein is Protein dumpy-20 (dpy-20) of Caenorhabditis elegans.